The following is a 262-amino-acid chain: Succinate dehydrogenase [ubiquinone] iron-sulfur subunit (262 aa).

One can recognise a 2Fe-2S ferredoxin-type domain in the interval 21 to 110 (KLIKIFRWDS…NNIIYVYPLP (90 aa)). 4 residues coordinate [2Fe-2S] cluster: C73, C78, C81, and C93. The 4Fe-4S ferredoxin-type domain occupies 154–184 (DRLYLDGLYECILCACCSASCPSYWWNHDKY). [4Fe-4S] cluster is bound by residues C164, C167, and C170. Residue C174 participates in [3Fe-4S] cluster binding. W179 contributes to the a ubiquinone binding site. Positions 221 and 227 each coordinate [3Fe-4S] cluster. C231 serves as a coordination point for [4Fe-4S] cluster.

The protein belongs to the succinate dehydrogenase/fumarate reductase iron-sulfur protein family. Component of complex II composed of four subunits: a flavoprotein (FP), an iron-sulfur protein (IP), and a cytochrome b composed of a large and a small subunit. Requires [2Fe-2S] cluster as cofactor. It depends on [3Fe-4S] cluster as a cofactor. [4Fe-4S] cluster is required as a cofactor.

Its subcellular location is the mitochondrion inner membrane. The enzyme catalyses a quinone + succinate = fumarate + a quinol. It functions in the pathway carbohydrate metabolism; tricarboxylic acid cycle; fumarate from succinate (eukaryal route): step 1/1. Functionally, iron-sulfur protein (IP) subunit of succinate dehydrogenase (SDH) that is involved in complex II of the mitochondrial electron transport chain and is responsible for transferring electrons from succinate to ubiquinone (coenzyme Q). This is Succinate dehydrogenase [ubiquinone] iron-sulfur subunit (SDH2) from Cyanidium caldarium (Red alga).